A 451-amino-acid chain; its full sequence is Phosphoglucosamine mutase (451 aa).

The Phosphoserine intermediate role is filled by Ser-104. Residues Ser-104, Asp-249, Asp-251, and Asp-253 each coordinate Mg(2+). The residue at position 104 (Ser-104) is a Phosphoserine.

Belongs to the phosphohexose mutase family. Mg(2+) is required as a cofactor. In terms of processing, activated by phosphorylation.

It carries out the reaction alpha-D-glucosamine 1-phosphate = D-glucosamine 6-phosphate. Functionally, catalyzes the conversion of glucosamine-6-phosphate to glucosamine-1-phosphate. This is Phosphoglucosamine mutase from Psychrobacter sp. (strain PRwf-1).